Reading from the N-terminus, the 402-residue chain is Speedy protein E2 (402 aa).

A disordered region spans residues 1-89 (MDRTETRFRK…EEPEKELAPE (89 aa)). The span at 16 to 39 (GKITTSRQPHPQNEQSPQRSTSGY) shows a compositional bias: polar residues. A compositionally biased stretch (acidic residues) spans 76 to 89 (DESEEEPEKELAPE).

It belongs to the Speedy/Ringo family.

The polypeptide is Speedy protein E2 (SPDYE2) (Homo sapiens (Human)).